Here is a 469-residue protein sequence, read N- to C-terminus: uncharacterized protein (469 aa).

Positions 13 to 81 (TPLYEQLYTF…PKIGWFAAEV (69 aa)) constitute an HTH gntR-type domain. Residues 41–60 (KRRLSSLLDVSTATIERAYE) constitute a DNA-binding region (H-T-H motif). K309 bears the N6-(pyridoxal phosphate)lysine mark.

This sequence in the C-terminal section; belongs to the class-I pyridoxal-phosphate-dependent aminotransferase family. Pyridoxal 5'-phosphate is required as a cofactor.

This is an uncharacterized protein from Bacillus subtilis (strain 168).